The chain runs to 529 residues: Chaperonin GroEL, chloroplastic (529 aa).

Residues 29–32 (TLGP), 86–90 (DGTTT), Gly414, 480–482 (DAA), and Asp496 contribute to the ATP site.

Belongs to the chaperonin (HSP60) family. In terms of assembly, forms a cylinder of 14 subunits composed of two heptameric rings stacked back-to-back. Interacts with the co-chaperonin GroES.

The protein resides in the plastid. The protein localises to the chloroplast. The enzyme catalyses ATP + H2O + a folded polypeptide = ADP + phosphate + an unfolded polypeptide.. In terms of biological role, together with its co-chaperonin GroES, plays an essential role in assisting protein folding. The GroEL-GroES system forms a nano-cage that allows encapsulation of the non-native substrate proteins and provides a physical environment optimized to promote and accelerate protein folding. The protein is Chaperonin GroEL, chloroplastic of Guillardia theta (Cryptophyte).